We begin with the raw amino-acid sequence, 700 residues long: Mitogen-activated protein kinase 9 (700 aa).

A Protein kinase domain is found at 107 to 398 (YRIQEVIGKG…AEEALTDPYF (292 aa)). ATP contacts are provided by residues 113-121 (IGKGSYGVV) and lysine 136. Aspartate 233 acts as the Proton acceptor in catalysis. Phosphothreonine is present on threonine 269. Residues 269–271 (TDY) carry the TXY motif. Position 271 is a phosphotyrosine (tyrosine 271). Positions 475 to 523 (EESNGSGSAIPMERKHASLPRSTTVHSTPIPPKEQPLAASLKSSRPVSD) are disordered.

Belongs to the protein kinase superfamily. CMGC Ser/Thr protein kinase family. MAP kinase subfamily. Dually phosphorylated on Thr-269 and Tyr-271, which activates the enzyme.

It carries out the reaction L-seryl-[protein] + ATP = O-phospho-L-seryl-[protein] + ADP + H(+). It catalyses the reaction L-threonyl-[protein] + ATP = O-phospho-L-threonyl-[protein] + ADP + H(+). Its activity is regulated as follows. Activated by threonine and tyrosine phosphorylation. In Oryza sativa subsp. japonica (Rice), this protein is Mitogen-activated protein kinase 9 (MPK9).